The following is a 546-amino-acid chain: 2-isopropylmalate synthase (546 aa).

The region spanning 8-271 (ILIFDTTLRD…NSFFGRSSDS (264 aa)) is the Pyruvate carboxyltransferase domain. Mn(2+)-binding residues include aspartate 17, histidine 208, histidine 210, and asparagine 244. Residues 408–546 (QLSHVQVSCG…KNKVLSNPKK (139 aa)) are regulatory domain.

Belongs to the alpha-IPM synthase/homocitrate synthase family. LeuA type 1 subfamily. Homodimer. Requires Mn(2+) as cofactor.

The protein resides in the cytoplasm. The catalysed reaction is 3-methyl-2-oxobutanoate + acetyl-CoA + H2O = (2S)-2-isopropylmalate + CoA + H(+). It participates in amino-acid biosynthesis; L-leucine biosynthesis; L-leucine from 3-methyl-2-oxobutanoate: step 1/4. Functionally, catalyzes the condensation of the acetyl group of acetyl-CoA with 3-methyl-2-oxobutanoate (2-ketoisovalerate) to form 3-carboxy-3-hydroxy-4-methylpentanoate (2-isopropylmalate). This chain is 2-isopropylmalate synthase, found in Prochlorococcus marinus subsp. pastoris (strain CCMP1986 / NIES-2087 / MED4).